The chain runs to 264 residues: Apolipoprotein A-I (264 aa).

The first 18 residues, 1 to 18 (MKAVVLAVAVLFLTGSQA), serve as a signal peptide directing secretion. A run of 2 repeats spans residues 67–88 (LNLL…EQLG) and 89–110 (PVTR…QEMN). The 10 X approximate tandem repeats stretch occupies residues 67–264 (LNLLENWDTF…DEATQKLNTQ (198 aa)). Position 109 is a methionine sulfoxide (Met-109). The stretch at 111 to 121 (KDLEEVKQKVQ) is one 3; half-length repeat. 3 tandem repeats follow at residues 122–143 (PYLD…PKVE), 144–165 (PLGA…KQLV), and 166–187 (PLGE…TKLA). The stretch at 188 to 207 (PYSDQMRDRLAERLTALRDN) is one 7; truncated repeat. Residue Met-193 is modified to Methionine sulfoxide. Copy 8 of the repeat occupies 208–229 (PKLAEYHARATEHLKKLGEKTK). Residues 230-240 (PTLEDLRQGLM) form a 9; half-length repeat. Met-240 carries the post-translational modification Methionine sulfoxide. Copy 10 of the repeat occupies 241-264 (PWLESLKAKALSVLDEATQKLNTQ).

Belongs to the apolipoprotein A1/A4/E family. In terms of assembly, homodimer. Interacts with APOA1BP and CLU. Component of a sperm activating protein complex (SPAP), consisting of APOA1, an immunoglobulin heavy chain, an immunoglobulin light chain and albumin. Interacts with NDRG1. Interacts with SCGB3A2. Interacts with NAXE and YJEFN3. Post-translationally, glycosylated. In terms of processing, palmitoylated. Phosphorylation sites are present in the extracellular medium.

The protein resides in the secreted. Participates in the reverse transport of cholesterol from tissues to the liver for excretion by promoting cholesterol efflux from tissues and by acting as a cofactor for the lecithin cholesterol acyltransferase (LCAT). As part of the SPAP complex, activates spermatozoa motility. This Nannospalax galili (Northern Israeli blind subterranean mole rat) protein is Apolipoprotein A-I (Apoa1).